Consider the following 235-residue polypeptide: Purine nucleoside phosphorylase DeoD-type (235 aa).

Position 4 (histidine 4) interacts with a purine D-ribonucleoside. Phosphate contacts are provided by residues glycine 20, arginine 24, arginine 43, and arginine 87–threonine 90. A purine D-ribonucleoside contacts are provided by residues glutamate 179–glutamate 181 and serine 203–asparagine 204.

Belongs to the PNP/UDP phosphorylase family. In terms of assembly, homohexamer; trimer of homodimers.

It catalyses the reaction a purine D-ribonucleoside + phosphate = a purine nucleobase + alpha-D-ribose 1-phosphate. It carries out the reaction a purine 2'-deoxy-D-ribonucleoside + phosphate = a purine nucleobase + 2-deoxy-alpha-D-ribose 1-phosphate. In terms of biological role, catalyzes the reversible phosphorolytic breakdown of the N-glycosidic bond in the beta-(deoxy)ribonucleoside molecules, with the formation of the corresponding free purine bases and pentose-1-phosphate. In Levilactobacillus brevis (strain ATCC 367 / BCRC 12310 / CIP 105137 / JCM 1170 / LMG 11437 / NCIMB 947 / NCTC 947) (Lactobacillus brevis), this protein is Purine nucleoside phosphorylase DeoD-type.